The sequence spans 253 residues: Triosephosphate isomerase (253 aa).

8-10 contributes to the substrate binding site; sequence NWK. The active-site Electrophile is the histidine 91. Glutamate 168 serves as the catalytic Proton acceptor. Residues glycine 174, serine 213, and 234 to 235 contribute to the substrate site; that span reads GG.

It belongs to the triosephosphate isomerase family. In terms of assembly, homodimer.

It localises to the cytoplasm. The enzyme catalyses D-glyceraldehyde 3-phosphate = dihydroxyacetone phosphate. It participates in carbohydrate biosynthesis; gluconeogenesis. Its pathway is carbohydrate degradation; glycolysis; D-glyceraldehyde 3-phosphate from glycerone phosphate: step 1/1. Involved in the gluconeogenesis. Catalyzes stereospecifically the conversion of dihydroxyacetone phosphate (DHAP) to D-glyceraldehyde-3-phosphate (G3P). The sequence is that of Triosephosphate isomerase from Acidiphilium cryptum (strain JF-5).